The sequence spans 239 residues: MRGILIAIEGVNRVGKSTQAMRLKKALECMDYNAVCIRFPNPDTTTGDLILQVLNKMIEMSSEQLHKLFTKHCSEFVAEIAALLKLNFIVIVDRYIWSGLAYAQADGITIETKNIFKPDYTFFLSSKKPLNEKPLTLQRLFETKEKQETIFTNFTIIMNDVPKNRLCIIPATLNKEIIHTMILTKTIKVFDNNSCLNYIKMYDDKYLNVQELNLFDFEWQKCIEDNNDKEEYDDDDFII.

10–17 (GVNRVGKS) lines the ATP pocket.

This sequence belongs to the thymidylate kinase family.

It carries out the reaction dTMP + ATP = dTDP + ADP. The protein operates within pyrimidine metabolism; dTTP biosynthesis. Functionally, catalyzes the conversion of dTMP to dTDP. The polypeptide is Thymidylate kinase (TMK) (African swine fever virus (isolate Tick/South Africa/Pretoriuskop Pr4/1996) (ASFV)).